Reading from the N-terminus, the 403-residue chain is Argininosuccinate synthase 1 (403 aa).

Residues 10–18 (SYSGGLDTS) and alanine 37 each bind ATP. Positions 88 and 93 each coordinate L-citrulline. Residue glycine 118 participates in ATP binding. L-aspartate contacts are provided by threonine 120, asparagine 124, and aspartate 125. Position 124 (asparagine 124) interacts with L-citrulline. L-citrulline is bound by residues arginine 128, serine 179, serine 188, glutamate 264, and tyrosine 276.

This sequence belongs to the argininosuccinate synthase family. Type 1 subfamily. As to quaternary structure, homotetramer.

Its subcellular location is the cytoplasm. The catalysed reaction is L-citrulline + L-aspartate + ATP = 2-(N(omega)-L-arginino)succinate + AMP + diphosphate + H(+). It participates in amino-acid biosynthesis; L-arginine biosynthesis; L-arginine from L-ornithine and carbamoyl phosphate: step 2/3. The polypeptide is Argininosuccinate synthase 1 (Rhizobium johnstonii (strain DSM 114642 / LMG 32736 / 3841) (Rhizobium leguminosarum bv. viciae)).